Consider the following 286-residue polypeptide: NFU1 iron-sulfur cluster scaffold homolog, mitochondrial (286 aa).

The N-terminal 66 residues, 1 to 66, are a transit peptide targeting the mitochondrion; the sequence is MSKLLTNTAL…RQIQLSGARN (66 aa). The tract at residues 182-250 is nifU; it reads IKELLDTRIR…IPEVESVEQV (69 aa). Residues Cys-219 and Cys-222 each contribute to the [4Fe-4S] cluster site.

Belongs to the NifU family.

The protein resides in the mitochondrion. In terms of biological role, molecular scaffold for [Fe-S] cluster assembly of mitochondrial iron-sulfur proteins. This is NFU1 iron-sulfur cluster scaffold homolog, mitochondrial from Drosophila ananassae (Fruit fly).